Here is a 632-residue protein sequence, read N- to C-terminus: Biosynthetic arginine decarboxylase (632 aa).

At lysine 101 the chain carries N6-(pyridoxal phosphate)lysine. 281 to 291 (FDVGGGLGVDY) serves as a coordination point for substrate.

Belongs to the Orn/Lys/Arg decarboxylase class-II family. SpeA subfamily. The cofactor is Mg(2+). Requires pyridoxal 5'-phosphate as cofactor.

The enzyme catalyses L-arginine + H(+) = agmatine + CO2. Its pathway is amine and polyamine biosynthesis; agmatine biosynthesis; agmatine from L-arginine: step 1/1. In terms of biological role, catalyzes the biosynthesis of agmatine from arginine. The chain is Biosynthetic arginine decarboxylase from Salmonella agona (strain SL483).